The following is a 125-amino-acid chain: Protein MGF 360-9L (125 aa).

Belongs to the asfivirus MGF 360 family. In terms of assembly, interacts with host STAT1; this interaction mediates STAT1 degradation through apoptosis. Interacts with host STAT2; this interaction mediates STAT2 degradation through the proteasome.

The protein resides in the host cytoplasm. In terms of biological role, plays a role in virus cell tropism, and may be required for efficient virus replication in macrophages. In addition, inhibits IFN-beta-induced IFN-stimulated genes (ISGs) transcription. Mechanistically, degrades host STAT1 and STAT2 through apoptosis and ubiquitin-proteasome pathways respectively. This is Protein MGF 360-9L from African swine fever virus (strain Badajoz 1971 Vero-adapted) (Ba71V).